Consider the following 2439-residue polypeptide: Centrosomal protein of 290 kDa (2439 aa).

2 coiled-coil regions span residues 75 to 913 (AEQA…VVTE) and 1271 to 1576 (NTML…YMDT). Disordered stretches follow at residues 1802–1824 (ETLN…EKEA), 1867–1890 (ELDR…KSSK), and 2017–2048 (ESRL…FQKE). Positions 2039–2048 (SQREHEFQKE) are enriched in basic and acidic residues. The stretch at 2046–2394 (QKENLRLSTE…KLTQELKHFD (349 aa)) forms a coiled coil.

Part of the tectonic-like complex (also named B9 complex).

Its subcellular location is the cytoplasm. The protein localises to the cytoskeleton. The protein resides in the microtubule organizing center. It localises to the centrosome. It is found in the centriolar satellite. Its subcellular location is the nucleus. The protein localises to the cilium basal body. Involved in early and late steps in cilia formation. May play a role in early ciliogenesis in the disappearance of centriolar satellites and in the transition of primary ciliar vesicles (PCVs) to capped ciliary vesicles (CCVs). In the ciliary transition zone is part of the tectonic-like complex which is required for tissue-specific ciliogenesis and may regulate ciliary membrane composition. Involved in regulation of the BBSome complex integrity and in ciliary targeting of selected BBSome cargos. Required for the correct localization of ciliary and phototransduction proteins in retinal photoreceptor cells; may play a role in ciliary transport processes. Involved in development of the nervous system and kidney. The sequence is that of Centrosomal protein of 290 kDa (cep290) from Danio rerio (Zebrafish).